Consider the following 287-residue polypeptide: U-megalopygitoxin(8)-Mc8 (287 aa).

Positions 1–17 (MYLQYLVLSLFSTTVYG) are cleaved as a signal peptide.

The protein belongs to the caterpillar 8 family. Post-translationally, contains 2 disulfide bonds. In terms of tissue distribution, expressed by the venom apparatus.

The protein localises to the secreted. Functionally, probable toxin. This is U-megalopygitoxin(8)-Mc8 from Megalopyge crispata (Black-waved flannel moth).